The chain runs to 220 residues: Germin-like protein subfamily T member 2 (220 aa).

The first 27 residues, 1–27 (MTTLQISSSLFRSFLLVICVFVIPSLS), serve as a signal peptide directing secretion. A disulfide bridge links Cys-37 with Cys-52. The 149-residue stretch at 64–212 (SGLGGPLNTS…TFRTDDVTVN (149 aa)) folds into the Cupin type-1 domain. Residue Asn-71 is glycosylated (N-linked (GlcNAc...) asparagine). His-112, His-114, and Glu-119 together coordinate Mn(2+). An N-linked (GlcNAc...) asparagine glycan is attached at Asn-136. Residue His-158 coordinates Mn(2+).

It belongs to the germin family. As to quaternary structure, oligomer (believed to be a pentamer but probably hexamer).

Its subcellular location is the secreted. It is found in the extracellular space. The protein resides in the apoplast. Functionally, may play a role in plant defense. Probably has no oxalate oxidase activity even if the active site is conserved. The sequence is that of Germin-like protein subfamily T member 2 from Arabidopsis thaliana (Mouse-ear cress).